The following is a 249-amino-acid chain: 2,3-bisphosphoglycerate-dependent phosphoglycerate mutase (249 aa).

Substrate is bound by residues 11 to 18, 24 to 25, arginine 63, 90 to 93, lysine 101, 117 to 118, and 184 to 185; these read RHGESDWN, TG, ERHY, RR, and GN. The active-site Tele-phosphohistidine intermediate is histidine 12. Glutamate 90 functions as the Proton donor/acceptor in the catalytic mechanism.

Belongs to the phosphoglycerate mutase family. BPG-dependent PGAM subfamily.

It catalyses the reaction (2R)-2-phosphoglycerate = (2R)-3-phosphoglycerate. Its pathway is carbohydrate degradation; glycolysis; pyruvate from D-glyceraldehyde 3-phosphate: step 3/5. Its function is as follows. Catalyzes the interconversion of 2-phosphoglycerate and 3-phosphoglycerate. This is 2,3-bisphosphoglycerate-dependent phosphoglycerate mutase from Mycobacterium bovis (strain BCG / Pasteur 1173P2).